A 445-amino-acid chain; its full sequence is Argininosuccinate synthase (445 aa).

ATP is bound by residues 17-25 (AFSGGLDTS) and A43. L-citrulline is bound at residue Y99. 2 residues coordinate ATP: G129 and T131. T131, N135, and D136 together coordinate L-aspartate. N135 provides a ligand contact to L-citrulline. ATP is bound at residue D136. R139 and S192 together coordinate L-citrulline. D194 is a binding site for ATP. Positions 201, 203, and 280 each coordinate L-citrulline.

Belongs to the argininosuccinate synthase family. Type 2 subfamily. In terms of assembly, homotetramer.

The protein resides in the cytoplasm. It catalyses the reaction L-citrulline + L-aspartate + ATP = 2-(N(omega)-L-arginino)succinate + AMP + diphosphate + H(+). Its pathway is amino-acid biosynthesis; L-arginine biosynthesis; L-arginine from L-ornithine and carbamoyl phosphate: step 2/3. The polypeptide is Argininosuccinate synthase (Burkholderia ambifaria (strain ATCC BAA-244 / DSM 16087 / CCUG 44356 / LMG 19182 / AMMD) (Burkholderia cepacia (strain AMMD))).